We begin with the raw amino-acid sequence, 493 residues long: Glutamyl-tRNA(Gln) amidotransferase subunit A (493 aa).

Catalysis depends on charge relay system residues Lys78 and Ser158. The active-site Acyl-ester intermediate is Ser182.

It belongs to the amidase family. GatA subfamily. Heterotrimer of A, B and C subunits.

It catalyses the reaction L-glutamyl-tRNA(Gln) + L-glutamine + ATP + H2O = L-glutaminyl-tRNA(Gln) + L-glutamate + ADP + phosphate + H(+). Functionally, allows the formation of correctly charged Gln-tRNA(Gln) through the transamidation of misacylated Glu-tRNA(Gln) in organisms which lack glutaminyl-tRNA synthetase. The reaction takes place in the presence of glutamine and ATP through an activated gamma-phospho-Glu-tRNA(Gln). The protein is Glutamyl-tRNA(Gln) amidotransferase subunit A of Rickettsia felis (strain ATCC VR-1525 / URRWXCal2) (Rickettsia azadi).